We begin with the raw amino-acid sequence, 193 residues long: uncharacterized protein (193 aa).

Residues 55-94 are disordered; the sequence is PVGGAAGARSLSQALPAPAPPPPPPPGLGPSSERPWPSPW. The span at 71–82 shows a compositional bias: pro residues; that stretch reads APAPPPPPPPGL.

This is an uncharacterized protein from Homo sapiens (Human).